Consider the following 371-residue polypeptide: Putative RNA-binding protein Luc7-like 1 (371 aa).

Coiled-coil stretches lie at residues 87-177 and 218-259; these read MDHL…RNSM and FIQI…LSRR. Residues 232–257 show a composition bias toward basic and acidic residues; it reads VAEKQEKRNQDRLRRREEREREERLS. Positions 232–371 are disordered; it reads VAEKQEKRNQ…RSEEKEAGEI (140 aa). Over residues 258-317 the composition is skewed to basic residues; it reads RRSGSRTRDRRRSRSRDRRRRRSRSTSRERRKLSRSRSRDRHRRHRSRSRSHSRGHRRAS. Basic and acidic residues-rich tracts occupy residues 318–351 and 361–371; these read RDRSAKYKFSRERASREESWESGRSERGPPDWRL and RRSEEKEAGEI. Residues Ser-332, Ser-336, and Ser-363 each carry the phosphoserine modification.

Belongs to the Luc7 family. As to expression, ubiquitous.

Its function is as follows. May bind to RNA via its Arg/Ser-rich domain. The chain is Putative RNA-binding protein Luc7-like 1 (LUC7L) from Homo sapiens (Human).